An 88-amino-acid polypeptide reads, in one-letter code: UPF0250 protein Sama_2593 (88 aa).

This sequence belongs to the UPF0250 family.

The protein is UPF0250 protein Sama_2593 of Shewanella amazonensis (strain ATCC BAA-1098 / SB2B).